The sequence spans 467 residues: Serine/threonine-protein kinase AFC1 (467 aa).

The Protein kinase domain maps to 115 to 443; it reads YQILSKMGEG…AREALNHPFF (329 aa). ATP contacts are provided by residues 121 to 129 and K144; that span reads MGEGTFGQV. D240 (proton acceptor) is an active-site residue. The tract at residues 447–467 is disordered; that stretch reads REQSIPPFNPNPHPFLYNQKN.

Belongs to the protein kinase superfamily. CMGC Ser/Thr protein kinase family. Lammer subfamily.

It carries out the reaction L-seryl-[protein] + ATP = O-phospho-L-seryl-[protein] + ADP + H(+). The enzyme catalyses L-threonyl-[protein] + ATP = O-phospho-L-threonyl-[protein] + ADP + H(+). The catalysed reaction is L-tyrosyl-[protein] + ATP = O-phospho-L-tyrosyl-[protein] + ADP + H(+). Functionally, activator of yeast transcription factor, STE12. This is Serine/threonine-protein kinase AFC1 (AFC1) from Arabidopsis thaliana (Mouse-ear cress).